An 82-amino-acid polypeptide reads, in one-letter code: Small ribosomal subunit protein bS18 (82 aa).

The disordered stretch occupies residues 1-20 (MVDINQIPTRRPFHRRRKTC).

It belongs to the bacterial ribosomal protein bS18 family. Part of the 30S ribosomal subunit. Forms a tight heterodimer with protein bS6.

Functionally, binds as a heterodimer with protein bS6 to the central domain of the 16S rRNA, where it helps stabilize the platform of the 30S subunit. This chain is Small ribosomal subunit protein bS18, found in Chelativorans sp. (strain BNC1).